A 362-amino-acid polypeptide reads, in one-letter code: Outer mitochondrial transmembrane helix translocase (362 aa).

At 1 to 19 (MVLKEIPTENITRPLGRNE) the chain is on the mitochondrial intermembrane side. A helical membrane pass occupies residues 20–42 (VIGLLFRLTIFGAVTYFTIKWMV). Residues 43-362 (DAIDPTRKQK…HEAFMQVPLD (320 aa)) lie on the Cytoplasmic side of the membrane. Residue 137 to 144 (GPPGCGKT) coordinates ATP.

It belongs to the AAA ATPase family. MSP1 subfamily.

It localises to the mitochondrion outer membrane. Its subcellular location is the peroxisome membrane. It is found in the postsynaptic cell membrane. The enzyme catalyses [protein]-with a C-terminal TM segment(out) + ATP + H2O = [protein]-with a C-terminal TM segment(in) + ADP + phosphate + H(+). Functionally, outer mitochondrial translocase required to remove mislocalized tail-anchored transmembrane proteins on mitochondria. Specifically recognizes and binds tail-anchored transmembrane proteins: acts as a dislocase that mediates the ATP-dependent extraction of mistargeted tail-anchored transmembrane proteins from the mitochondrion outer membrane. Also plays a critical role in regulating the surface expression of AMPA receptors (AMPAR), thereby regulating synaptic plasticity and learning and memory. In Danio rerio (Zebrafish), this protein is Outer mitochondrial transmembrane helix translocase.